The sequence spans 152 residues: 3-hydroxyacyl-[acyl-carrier-protein] dehydratase FabZ (152 aa).

Histidine 57 is an active-site residue.

Belongs to the thioester dehydratase family. FabZ subfamily.

The protein resides in the cytoplasm. The enzyme catalyses a (3R)-hydroxyacyl-[ACP] = a (2E)-enoyl-[ACP] + H2O. Its function is as follows. Involved in unsaturated fatty acids biosynthesis. Catalyzes the dehydration of short chain beta-hydroxyacyl-ACPs and long chain saturated and unsaturated beta-hydroxyacyl-ACPs. The polypeptide is 3-hydroxyacyl-[acyl-carrier-protein] dehydratase FabZ (Xanthomonas axonopodis pv. citri (strain 306)).